A 351-amino-acid chain; its full sequence is Beta-hexosaminidase (351 aa).

Residues Asp-62, Arg-70, Arg-133, and 163–164 (KH) contribute to the substrate site. Residue His-176 is the Proton donor/acceptor of the active site. Residue Asp-248 is the Nucleophile of the active site.

The protein belongs to the glycosyl hydrolase 3 family. NagZ subfamily. In terms of assembly, monomer.

It is found in the cytoplasm. The enzyme catalyses Hydrolysis of terminal non-reducing N-acetyl-D-hexosamine residues in N-acetyl-beta-D-hexosaminides.. The protein operates within cell wall biogenesis; peptidoglycan recycling. Functionally, plays a role in peptidoglycan recycling by cleaving the terminal beta-1,4-linked N-acetylglucosamine (GlcNAc) from peptide-linked peptidoglycan fragments, giving rise to free GlcNAc, anhydro-N-acetylmuramic acid and anhydro-N-acetylmuramic acid-linked peptides. The sequence is that of Beta-hexosaminidase from Haemophilus influenzae (strain ATCC 51907 / DSM 11121 / KW20 / Rd).